The following is a 220-amino-acid chain: MNSWTDAIGEEKTQPYFQHILQYVHQERLVGKVIYPPQNEVFSAFALTEFKDVKVVILGQDPYHGPNQAHGLSFSVKPGIVPPPSLVNMYKELSQDVGFQIPSHGYLIEWAKQGVLLLNTVLTVEQGKAHSHANIGWETFTDKVIHQLNLHRENLVFLLWGSHAQKKGQFIDRSRHCVLTAPHPSPLSAHRGFLGCRHFSKTNDYLRSHGVEEINWQLPL.

Asp61 (proton acceptor) is an active-site residue.

This sequence belongs to the uracil-DNA glycosylase (UDG) superfamily. UNG family.

It localises to the cytoplasm. It catalyses the reaction Hydrolyzes single-stranded DNA or mismatched double-stranded DNA and polynucleotides, releasing free uracil.. In terms of biological role, excises uracil residues from the DNA which can arise as a result of misincorporation of dUMP residues by DNA polymerase or due to deamination of cytosine. This Glaesserella parasuis serovar 5 (strain SH0165) (Haemophilus parasuis) protein is Uracil-DNA glycosylase.